The following is a 300-amino-acid chain: MALSPQLFFALYVSAFALGFPLNLLAIRGAVARARLRLTPNLVYTLHLACSDLLLAITLPVKAVEALASGAWPLPLPLCPVFVLVHFAPLYAGGGFLAALSAGRYLGAAFPFGYQAVRRPRYSWGVCVAIWALVLCHMGLVLGLEAPGGWLNTTSSSLGINTPVNGSPVCLEAWDPNSARPARLSFSILLFFVPLVITAFCYVGCLRALAHSGLSHKRKLRAAWAAGGAFLTLLLCLGPYNASNVASFVNPDLGGSWRKLGLITGSWSVVLNPLVTGYLGASPGRGTVCTTRTQGGTIQK.

Residues 1–8 (MALSPQLF) lie on the Extracellular side of the membrane. Residues 9–31 (FALYVSAFALGFPLNLLAIRGAV) form a helical membrane-spanning segment. At 32-41 (ARARLRLTPN) the chain is on the cytoplasmic side. A helical membrane pass occupies residues 42-64 (LVYTLHLACSDLLLAITLPVKAV). The Extracellular portion of the chain corresponds to 65–79 (EALASGAWPLPLPLC). Cysteines 79 and 170 form a disulfide. A helical membrane pass occupies residues 80–101 (PVFVLVHFAPLYAGGGFLAALS). The Cytoplasmic portion of the chain corresponds to 102–121 (AGRYLGAAFPFGYQAVRRPR). The helical transmembrane segment at 122-142 (YSWGVCVAIWALVLCHMGLVL) threads the bilayer. Topologically, residues 143–178 (GLEAPGGWLNTTSSSLGINTPVNGSPVCLEAWDPNS) are extracellular. Asparagine 152 is a glycosylation site (N-linked (GlcNAc...) asparagine). Residues 179–200 (ARPARLSFSILLFFVPLVITAF) form a helical membrane-spanning segment. Residues 201-223 (CYVGCLRALAHSGLSHKRKLRAA) lie on the Cytoplasmic side of the membrane. Residues 224-248 (WAAGGAFLTLLLCLGPYNASNVASF) traverse the membrane as a helical segment. At 249-256 (VNPDLGGS) the chain is on the extracellular side. Residues 257-279 (WRKLGLITGSWSVVLNPLVTGYL) traverse the membrane as a helical segment. Over 280–300 (GASPGRGTVCTTRTQGGTIQK) the chain is Cytoplasmic.

The protein belongs to the G-protein coupled receptor 1 family.

The protein localises to the cell membrane. In terms of biological role, G-protein coupled receptor for medium and long chain saturated and unsaturated fatty acids that plays an important role in glucose homeostasis. Fatty acid binding increases glucose-stimulated insulin secretion, and may also enhance the secretion of glucagon-like peptide 1 (GLP-1). May also play a role in bone homeostasis; receptor signaling activates pathways that inhibit osteoclast differentiation. Ligand binding leads to a conformation change that triggers signaling via G-proteins that activate phospholipase C, leading to an increase of the intracellular calcium concentration. Seems to act through a G(q) and G(i)-mediated pathway. Mediates the anti-inflammatory effects of omega-3 polyunsaturated fatty acids (PUFAs) via inhibition of NLRP3 inflammasome activation. The chain is Free fatty acid receptor 1 (FFAR1) from Mesocricetus auratus (Golden hamster).